The following is a 420-amino-acid chain: Glucose-1-phosphate adenylyltransferase (420 aa).

Alpha-D-glucose 1-phosphate-binding positions include Tyr97, Gly162, 177–178 (EK), and Ser188.

This sequence belongs to the bacterial/plant glucose-1-phosphate adenylyltransferase family. Homotetramer.

The catalysed reaction is alpha-D-glucose 1-phosphate + ATP + H(+) = ADP-alpha-D-glucose + diphosphate. It functions in the pathway glycan biosynthesis; glycogen biosynthesis. Involved in the biosynthesis of ADP-glucose, a building block required for the elongation reactions to produce glycogen. Catalyzes the reaction between ATP and alpha-D-glucose 1-phosphate (G1P) to produce pyrophosphate and ADP-Glc. This is Glucose-1-phosphate adenylyltransferase from Pseudothermotoga lettingae (strain ATCC BAA-301 / DSM 14385 / NBRC 107922 / TMO) (Thermotoga lettingae).